The sequence spans 291 residues: ATP synthase gamma chain (291 aa).

Belongs to the ATPase gamma chain family. As to quaternary structure, F-type ATPases have 2 components, CF(1) - the catalytic core - and CF(0) - the membrane proton channel. CF(1) has five subunits: alpha(3), beta(3), gamma(1), delta(1), epsilon(1). CF(0) has three main subunits: a, b and c.

The protein localises to the cell inner membrane. In terms of biological role, produces ATP from ADP in the presence of a proton gradient across the membrane. The gamma chain is believed to be important in regulating ATPase activity and the flow of protons through the CF(0) complex. The polypeptide is ATP synthase gamma chain (Burkholderia pseudomallei (strain 1106a)).